Reading from the N-terminus, the 148-residue chain is 3-dehydroquinate dehydratase (148 aa).

Catalysis depends on tyrosine 23, which acts as the Proton acceptor. Residues asparagine 75, histidine 81, and aspartate 88 each coordinate substrate. Histidine 101 (proton donor) is an active-site residue. Residues 102 to 103 (LS) and arginine 112 each bind substrate.

This sequence belongs to the type-II 3-dehydroquinase family. As to quaternary structure, homododecamer.

It carries out the reaction 3-dehydroquinate = 3-dehydroshikimate + H2O. It participates in metabolic intermediate biosynthesis; chorismate biosynthesis; chorismate from D-erythrose 4-phosphate and phosphoenolpyruvate: step 3/7. Its function is as follows. Catalyzes a trans-dehydration via an enolate intermediate. The chain is 3-dehydroquinate dehydratase from Ectopseudomonas mendocina (strain ymp) (Pseudomonas mendocina).